Consider the following 368-residue polypeptide: Branched-chain-amino-acid aminotransferase (368 aa).

Residue Arg101 coordinates pyridoxal 5'-phosphate. At Lys204 the chain carries N6-(pyridoxal phosphate)lysine. Pyridoxal 5'-phosphate contacts are provided by residues Tyr209 and 271–272 (IT). Lys299 is covalently cross-linked (Isoglutamyl lysine isopeptide (Lys-Gln) (interchain with Q-Cter in protein Pup)). Residue Thr314 participates in pyridoxal 5'-phosphate binding.

It belongs to the class-IV pyridoxal-phosphate-dependent aminotransferase family. As to quaternary structure, homodimer. Pyridoxal 5'-phosphate serves as cofactor.

It catalyses the reaction L-isoleucine + 2-oxoglutarate = (S)-3-methyl-2-oxopentanoate + L-glutamate. The catalysed reaction is L-valine + 2-oxoglutarate = 3-methyl-2-oxobutanoate + L-glutamate. The enzyme catalyses L-leucine + 2-oxoglutarate = 4-methyl-2-oxopentanoate + L-glutamate. The protein operates within amino-acid biosynthesis; L-isoleucine biosynthesis; L-isoleucine from 2-oxobutanoate: step 4/4. Its pathway is amino-acid biosynthesis; L-leucine biosynthesis; L-leucine from 3-methyl-2-oxobutanoate: step 4/4. It participates in amino-acid biosynthesis; L-valine biosynthesis; L-valine from pyruvate: step 4/4. Its activity is regulated as follows. Inhibited by ammonium sulfate at millimolar concentrations and by O-benzylhydroxylamine (Obe). In terms of biological role, catalyzes the reversible transfers of an amino group from glutamate to the alpha-ketoacid of the respective amino acid in the final step in the biosynthesis of branchedchain amino acids. The amino acids can be ranked in the following order with respect to their efficiency as amino donor: Leu &gt; Ile &gt; Val. This is Branched-chain-amino-acid aminotransferase (ilvE) from Mycolicibacterium smegmatis (strain ATCC 700084 / mc(2)155) (Mycobacterium smegmatis).